The sequence spans 290 residues: Probable transcriptional regulatory protein HAH1 (290 aa).

This sequence belongs to the TACO1 family.

The protein localises to the mitochondrion. In Saccharomyces cerevisiae (strain ATCC 204508 / S288c) (Baker's yeast), this protein is Probable transcriptional regulatory protein HAH1.